The following is a 714-amino-acid chain: Calpain-1 catalytic subunit (714 aa).

The Calpain catalytic domain maps to 55–354 (LFRDEAFPPV…FTRLEICNLT (300 aa)). Ca(2+) contacts are provided by Gln-109 and Asp-114. Residues Cys-115, His-272, and Asn-296 contribute to the active site. Ca(2+) is bound by residues Asp-318 and Asp-323. Thr-354 carries the post-translational modification Phosphothreonine. The tract at residues 355–526 (PDALKSQRVR…KKAGTQELDD (172 aa)) is domain III. The tract at residues 527-542 (QVQAILPDEQVLSEEE) is linker. Residues 543-713 (IDENFKALFR…LFKWLQLTMF (171 aa)) form a domain IV region. 3 consecutive EF-hand domains span residues 585–618 (FSLE…NRIR), 615–650 (NRIR…AGFK), and 680–714 (VRLE…TMFA). Ca(2+)-binding residues include Asp-598, Asp-600, Asn-602, Lys-604, Glu-609, Asp-628, Asp-630, Ser-632, Ser-634, and Glu-639.

This sequence belongs to the peptidase C2 family. In terms of assembly, forms a heterodimer with a small (regulatory) subunit CAPNS1. Ca(2+) is required as a cofactor. Undergoes calcium-induced successive autoproteolytic cleavages that generate a membrane-bound 78 kDa active form and an intracellular 75 kDa active form. Calpastatin reduces with high efficiency the transition from 78 kDa to 75 kDa calpain forms.

It localises to the cytoplasm. The protein resides in the cell membrane. It carries out the reaction Broad endopeptidase specificity.. Its activity is regulated as follows. Activated by micromolar concentrations of calcium and inhibited by calpastatin. Calcium-regulated non-lysosomal thiol-protease which catalyzes limited proteolysis of substrates involved in cytoskeletal remodeling and signal transduction. Proteolytically cleaves CTBP1. Cleaves and activates caspase-7 (CASP7). The protein is Calpain-1 catalytic subunit of Sus scrofa (Pig).